Consider the following 504-residue polypeptide: Protein Dok-7 (504 aa).

One can recognise a PH domain in the interval Ala4–Gly109. In terms of domain architecture, IRS-type PTB spans Arg105 to Phe210. 3 disordered regions span residues Phe210–Glu229, Ser249–Ser351, and Leu411–Gly483. Composition is skewed to low complexity over residues Leu263 to Ser279 and Ser288 to Ala310. Polar residues predominate over residues Gly331–Ala341.

In terms of assembly, homodimer. Forms a heterotetramer composed of 2 DOK7 and 2 MUSK molecules which facilitates MUSK trans-autophosphorylation on tyrosine residue and activation. Interacts (via IRS-type PTB domain) with MUSK (via cytoplasmic part); requires MUSK phosphorylation. Preferentially expressed in skeletal muscle and heart. Present in thigh muscle, diaphragm and heart but not in the liver or spleen (at protein level).

Its subcellular location is the cell membrane. The protein resides in the synapse. Functionally, probable muscle-intrinsic activator of MUSK that plays an essential role in neuromuscular synaptogenesis. Acts in aneural activation of MUSK and subsequent acetylcholine receptor (AchR) clustering in myotubes. Induces autophosphorylation of MUSK. The polypeptide is Protein Dok-7 (DOK7) (Homo sapiens (Human)).